Consider the following 255-residue polypeptide: Putative expansin-A27 (255 aa).

Residues 1 to 24 form the signal peptide; it reads MGAMAENLLVLCTILAARMALAAA. The Expansin-like EG45 domain occupies 45–160; sequence GGACGYGNLY…RRVRCWRRGG (116 aa). The region spanning 170-249 is the Expansin-like CBD domain; it reads HFELVLVANV…GWKFGQTFST (80 aa).

This sequence belongs to the expansin family. Expansin A subfamily.

It localises to the secreted. It is found in the cell wall. The protein localises to the membrane. May cause loosening and extension of plant cell walls by disrupting non-covalent bonding between cellulose microfibrils and matrix glucans. No enzymatic activity has been found. May be required for rapid internodal elongation in deepwater rice during submergence. The sequence is that of Putative expansin-A27 (EXPA27) from Oryza sativa subsp. japonica (Rice).